The chain runs to 341 residues: L-threonine 3-dehydrogenase (341 aa).

C38 contributes to the Zn(2+) binding site. Residues T40 and H43 each act as charge relay system in the active site. The Zn(2+) site is built by H63, E64, C93, C96, C99, and C107. NAD(+) contacts are provided by residues I175, D195, R200, 262 to 264, and 286 to 287; these read LGI and IY.

Belongs to the zinc-containing alcohol dehydrogenase family. Homotetramer. It depends on Zn(2+) as a cofactor.

The protein resides in the cytoplasm. It carries out the reaction L-threonine + NAD(+) = (2S)-2-amino-3-oxobutanoate + NADH + H(+). It participates in amino-acid degradation; L-threonine degradation via oxydo-reductase pathway; glycine from L-threonine: step 1/2. Functionally, catalyzes the NAD(+)-dependent oxidation of L-threonine to 2-amino-3-ketobutyrate. The protein is L-threonine 3-dehydrogenase of Alteromonas mediterranea (strain DSM 17117 / CIP 110805 / LMG 28347 / Deep ecotype).